The primary structure comprises 588 residues: Lamin-B1 (588 aa).

Over residues 1-12 (MATATPVQQQRA) the composition is skewed to polar residues. Residues 1–34 (MATATPVQQQRAGSRASAPATPLSPTRLSRLQEK) form a disordered region. Position 2 is an N-acetylalanine (alanine 2). A head region spans residues 2–35 (ATATPVQQQRAGSRASAPATPLSPTRLSRLQEKE). 2 positions are modified to phosphothreonine: threonine 3 and threonine 5. Omega-N-methylarginine is present on arginine 15. Serine 17 carries the phosphoserine modification. At threonine 21 the chain carries Phosphothreonine. Serine 24 bears the Phosphoserine mark. Threonine 26 is subject to Phosphothreonine. Serine 29 is subject to Phosphoserine. The 357-residue stretch at 33–389 (EKEELRELND…KLLEGEEERL (357 aa)) folds into the IF rod domain. Positions 36 to 70 (ELRELNDRLAVYIDKVRSLETENSALQLQVTEREE) are coil 1A. Positions 71-82 (VRGRELTGLKAL) are linker 1. A coil 1B region spans residues 83-216 (YETELADARR…EFRKNMYEEE (134 aa)). Residue lysine 103 forms a Glycyl lysine isopeptide (Lys-Gly) (interchain with G-Cter in SUMO2) linkage. At lysine 112 the chain carries N6-acetyllysine. Lysine 124 participates in a covalent cross-link: Glycyl lysine isopeptide (Lys-Gly) (interchain with G-Cter in SUMO2). Serine 127 carries the phosphoserine modification. A Glycyl lysine isopeptide (Lys-Gly) (interchain with G-Cter in SUMO2) cross-link involves residue lysine 146. Lysine 158 carries the post-translational modification N6-acetyllysine; alternate. A Glycyl lysine isopeptide (Lys-Gly) (interchain with G-Cter in SUMO2); alternate cross-link involves residue lysine 158. Serine 159 carries the phosphoserine modification. A Glycyl lysine isopeptide (Lys-Gly) (interchain with G-Cter in SUMO2) cross-link involves residue lysine 182. 2 positions are modified to phosphoserine: serine 201 and serine 233. Positions 217–244 (INETRRKHETRLVEVDSGRQIEYEYKLA) are linker 2. Glycyl lysine isopeptide (Lys-Gly) (interchain with G-Cter in SUMO2) cross-links involve residues lysine 242 and lysine 262. A coil 2 region spans residues 245 to 387 (QALHEMREQH…YRKLLEGEEE (143 aa)). Lysine 272 is subject to N6-acetyllysine; alternate. Lysine 272 is covalently cross-linked (Glycyl lysine isopeptide (Lys-Gly) (interchain with G-Cter in SUMO2); alternate). 2 positions are modified to phosphoserine: serine 279 and serine 303. A Glycyl lysine isopeptide (Lys-Gly) (interchain with G-Cter in SUMO2) cross-link involves residue lysine 313. The residue at position 331 (lysine 331) is an N6-acetyllysine; alternate. Residue lysine 331 forms a Glycyl lysine isopeptide (Lys-Gly) (interchain with G-Cter in SUMO2); alternate linkage. A phosphoserine mark is found at serine 376 and serine 394. The tail stretch occupies residues 388 to 588 (RLKLSPSPSS…RASNKSCAIM (201 aa)). Residues 391 to 410 (LSPSPSSRVTVSRASSSRSV) are compositionally biased toward low complexity. Positions 391 to 433 (LSPSPSSRVTVSRASSSRSVRTTRGKRKRVDVEESEASSSVSI) are disordered. Threonine 400 is a glycosylation site (O-linked (GlcNAc) threonine). Residue arginine 414 is modified to Omega-N-methylarginine. A Nuclear localization signal motif is present at residues 416 to 421 (KRKRVD). Residues 431–547 (VSISHSASAT…EEVAQRSTVF (117 aa)) enclose the LTD domain. Position 484 is an N6-acetyllysine (lysine 484). Lysine 533 participates in a covalent cross-link: Glycyl lysine isopeptide (Lys-Gly) (interchain with G-Cter in SUMO2). Serine 535 carries the phosphoserine modification. A Glycyl lysine isopeptide (Lys-Gly) (interchain with G-Cter in SUMO2) cross-link involves residue lysine 548. The residue at position 585 (cysteine 585) is a Cysteine methyl ester. Residue cysteine 585 is the site of S-farnesyl cysteine attachment. Positions 586 to 588 (AIM) are cleaved as a propeptide — removed in mature form.

The protein belongs to the intermediate filament family. In terms of assembly, homodimer. Lamin dimers then assemble into dimeric head-to-tail polymers. Ultimately, two head-to-tail polymers assemble laterally into a protofilament with a uniformly shaped rod of 3.5 nm in diameter. Interacts with SPAG4 and SEPT12. B-type lamins undergo a series of modifications, such as farnesylation and phosphorylation. Increased phosphorylation of the lamins occurs before envelope disintegration and probably plays a role in regulating lamin associations. In terms of processing, phosphorylation plays a key role in lamin organization, subcellular localization and nuclear envelope disintegration. Phosphorylation by CDK1 at Ser-24 and Ser-394 at the onset of mitosis drives lamin disassembly and nuclear envelope breakdown.

It is found in the nucleus lamina. Functionally, lamins are intermediate filament proteins that assemble into a filamentous meshwork, and which constitute the major components of the nuclear lamina, a fibrous layer on the nucleoplasmic side of the inner nuclear membrane. Lamins provide a framework for the nuclear envelope, bridging the nuclear envelope and chromatin, thereby playing an important role in nuclear assembly, chromatin organization, nuclear membrane and telomere dynamics. The structural integrity of the lamina is strictly controlled by the cell cycle, as seen by the disintegration and formation of the nuclear envelope in prophase and telophase, respectively. This chain is Lamin-B1 (Lmnb1), found in Mus musculus (Mouse).